Reading from the N-terminus, the 263-residue chain is tRNA dimethylallyltransferase (263 aa).

It belongs to the IPP transferase family. In terms of assembly, monomer. The cofactor is Mg(2+).

The enzyme catalyses adenosine(37) in tRNA + dimethylallyl diphosphate = N(6)-dimethylallyladenosine(37) in tRNA + diphosphate. Catalyzes the transfer of a dimethylallyl group onto the adenine at position 37 in tRNAs that read codons beginning with uridine, leading to the formation of N6-(dimethylallyl)adenosine (i(6)A). The protein is tRNA dimethylallyltransferase of Leifsonia xyli subsp. xyli (strain CTCB07).